The following is a 227-amino-acid chain: Ribosomal RNA large subunit methyltransferase E (227 aa).

S-adenosyl-L-methionine contacts are provided by glycine 78, tryptophan 80, aspartate 103, aspartate 119, and aspartate 143. Catalysis depends on lysine 183, which acts as the Proton acceptor.

The protein belongs to the class I-like SAM-binding methyltransferase superfamily. RNA methyltransferase RlmE family.

It is found in the cytoplasm. It catalyses the reaction uridine(2552) in 23S rRNA + S-adenosyl-L-methionine = 2'-O-methyluridine(2552) in 23S rRNA + S-adenosyl-L-homocysteine + H(+). Specifically methylates the uridine in position 2552 of 23S rRNA at the 2'-O position of the ribose in the fully assembled 50S ribosomal subunit. In Rickettsia typhi (strain ATCC VR-144 / Wilmington), this protein is Ribosomal RNA large subunit methyltransferase E.